The chain runs to 325 residues: Post-GPI attachment to proteins factor 2-like (325 aa).

A run of 6 helical transmembrane segments spans residues 80 to 100, 130 to 150, 171 to 191, 205 to 225, 243 to 263, and 276 to 296; these read VVTA…AYVF, YFWR…AFVY, LLIT…GGVT, IFIT…KLNG, WKKI…VFFA, and WFAF…FTII.

The protein belongs to the PGAP2 family.

The protein resides in the membrane. This is Post-GPI attachment to proteins factor 2-like from Drosophila melanogaster (Fruit fly).